A 158-amino-acid polypeptide reads, in one-letter code: MQPKIRVRGQYIKDLSFENPNAPKVFLMMSKTPPEINISVNVSSAALPVKPPEGEQASVALYEVALQINIESVVEKLPAFICEIKYCGVFSIEEDEELEQEQVKRALLINAPSILFPFVREVIAKVTSSAGFPPLMLEVIDFSAMYEKQLAENADGEK.

This sequence belongs to the SecB family. In terms of assembly, homotetramer, a dimer of dimers. One homotetramer interacts with 1 SecA dimer.

Its subcellular location is the cytoplasm. Functionally, one of the proteins required for the normal export of preproteins out of the cell cytoplasm. It is a molecular chaperone that binds to a subset of precursor proteins, maintaining them in a translocation-competent state. It also specifically binds to its receptor SecA. The sequence is that of Protein-export protein SecB from Anaplasma phagocytophilum (strain HZ).